The following is a 282-amino-acid chain: Putative hydrolase Bcenmc03_4750 (282 aa).

Mg(2+)-binding residues include Glu124, Glu126, and Asp155.

It belongs to the FAH family. Requires Mg(2+) as cofactor.

The protein is Putative hydrolase Bcenmc03_4750 of Burkholderia orbicola (strain MC0-3).